The chain runs to 208 residues: ATP-dependent Clp protease proteolytic subunit (208 aa).

Serine 105 (nucleophile) is an active-site residue. Histidine 130 is a catalytic residue.

The protein belongs to the peptidase S14 family. In terms of assembly, fourteen ClpP subunits assemble into 2 heptameric rings which stack back to back to give a disk-like structure with a central cavity, resembling the structure of eukaryotic proteasomes.

It localises to the cytoplasm. The enzyme catalyses Hydrolysis of proteins to small peptides in the presence of ATP and magnesium. alpha-casein is the usual test substrate. In the absence of ATP, only oligopeptides shorter than five residues are hydrolyzed (such as succinyl-Leu-Tyr-|-NHMec, and Leu-Tyr-Leu-|-Tyr-Trp, in which cleavage of the -Tyr-|-Leu- and -Tyr-|-Trp bonds also occurs).. Cleaves peptides in various proteins in a process that requires ATP hydrolysis. Has a chymotrypsin-like activity. Plays a major role in the degradation of misfolded proteins. The protein is ATP-dependent Clp protease proteolytic subunit of Xylella fastidiosa (strain M12).